A 258-amino-acid polypeptide reads, in one-letter code: UPF0246 protein YaaA (258 aa).

This sequence belongs to the UPF0246 family.

The sequence is that of UPF0246 protein YaaA from Escherichia coli O17:K52:H18 (strain UMN026 / ExPEC).